Reading from the N-terminus, the 391-residue chain is Elongation factor Tu (391 aa).

The tr-type G domain occupies 10 to 201 (KPHVNIGTIG…AVDDYIPTPE (192 aa)). A G1 region spans residues 19-26 (GHVDHGKT). 19–26 (GHVDHGKT) provides a ligand contact to GTP. Thr-26 contacts Mg(2+). Residues 55 to 59 (GITIS) form a G2 region. The segment at 76-79 (DCPG) is G3. GTP contacts are provided by residues 76 to 80 (DCPGH) and 131 to 134 (NKVD). Positions 131 to 134 (NKVD) are G4. A G5 region spans residues 169 to 171 (SAL).

Belongs to the TRAFAC class translation factor GTPase superfamily. Classic translation factor GTPase family. EF-Tu/EF-1A subfamily. Monomer.

It localises to the cytoplasm. The catalysed reaction is GTP + H2O = GDP + phosphate + H(+). Its function is as follows. GTP hydrolase that promotes the GTP-dependent binding of aminoacyl-tRNA to the A-site of ribosomes during protein biosynthesis. The protein is Elongation factor Tu of Paracoccus denitrificans (strain Pd 1222).